We begin with the raw amino-acid sequence, 246 residues long: 3-deoxy-manno-octulosonate cytidylyltransferase (246 aa).

It belongs to the KdsB family.

The protein resides in the cytoplasm. It catalyses the reaction 3-deoxy-alpha-D-manno-oct-2-ulosonate + CTP = CMP-3-deoxy-beta-D-manno-octulosonate + diphosphate. The protein operates within nucleotide-sugar biosynthesis; CMP-3-deoxy-D-manno-octulosonate biosynthesis; CMP-3-deoxy-D-manno-octulosonate from 3-deoxy-D-manno-octulosonate and CTP: step 1/1. Its pathway is bacterial outer membrane biogenesis; lipopolysaccharide biosynthesis. Functionally, activates KDO (a required 8-carbon sugar) for incorporation into bacterial lipopolysaccharide in Gram-negative bacteria. This chain is 3-deoxy-manno-octulosonate cytidylyltransferase, found in Rickettsia massiliae (strain Mtu5).